A 420-amino-acid polypeptide reads, in one-letter code: Torsin-4A-A (420 aa).

The chain crosses the membrane as a helical span at residues 130 to 150 (CLLLFIGIVCFQILNAIENLD). ATP is bound at residue 202-209 (GPSGVGKS).

Belongs to the ClpA/ClpB family. Torsin subfamily.

It localises to the membrane. In Xenopus laevis (African clawed frog), this protein is Torsin-4A-A (tor4a-a).